Consider the following 493-residue polypeptide: D-glyceraldehyde dehydrogenase (NADP(+)) (493 aa).

Residues 144–147 (TPWN), Arg-155, 170–174 (KPSSD), 202–208 (KGSEIGD), 223–246 (GSTSTGQRIMEKASKNMAKLILEL), Cys-279, and 379–381 (EIF) each bind NADP(+). Asn-147 and Arg-155 together coordinate substrate. Glu-245 acts as the Proton acceptor in catalysis. Cys-279 is a binding site for substrate. Catalysis depends on Cys-279, which acts as the Proton donor.

This sequence belongs to the aldehyde dehydrogenase family. Glyceraldehyde dehydrogenase subfamily. In terms of assembly, homotetramer. Dimer of dimers.

It catalyses the reaction D-glyceraldehyde + NADP(+) + H2O = (R)-glycerate + NADPH + 2 H(+). Its pathway is carbohydrate degradation; glycolysis. Stable for 2 hours at 60 degrees Celsius but activity is decreased to less than 50 percent within 15 minutes at 70 degrees Celsius. NADP-dependent dehydrogenase of the nED (non-phosphorylated Entner-Doudoroff) pathway with highest activity towards glyceraldehydes (e.g. D,L-glyceraldehyde and D-glyceraldehyde), to a lesser extent towards D,L-glyceraldehyde-3-phosphate and glycolaldehyde, but no activity towards aliphatic or aromatic aldehydes. In Picrophilus torridus (strain ATCC 700027 / DSM 9790 / JCM 10055 / NBRC 100828 / KAW 2/3), this protein is D-glyceraldehyde dehydrogenase (NADP(+)).